A 102-amino-acid chain; its full sequence is Parathymosin (102 aa).

A disordered region spans residues 1 to 102 (MSEKSVEAAA…RQKTENGASA (102 aa)). N-acetylserine is present on S2. At S2 the chain carries Phosphoserine. K4 is modified (N6-acetyllysine). 2 positions are modified to phosphoserine: S5 and S13. Residues 13 to 37 (SAKDLKEKKEKVEEKAGRKERKKEV) show a composition bias toward basic and acidic residues. K15 is modified (N6-acetyllysine). The segment covering 38–76 (VEEEENGAEEEEEETAEDGEEEDDGDEEDEEEEEEEDEG) has biased composition (acidic residues). Phosphothreonine is present on T52. At K92 the chain carries N6-acetyllysine.

This sequence belongs to the pro/parathymosin family.

Parathymosin may mediate immune function by blocking the effect of prothymosin alpha which confers resistance to certain opportunistic infections. This is Parathymosin (PTMS) from Bos taurus (Bovine).